The following is a 173-amino-acid chain: Shikimate kinase 1 (173 aa).

Residue 14 to 19 (GAGKST) participates in ATP binding. Residue S18 participates in Mg(2+) binding. D36, R60, and G82 together coordinate substrate. R120 is a binding site for ATP. Residue R140 participates in substrate binding. Residue Q157 participates in ATP binding.

Belongs to the shikimate kinase family. Monomer. The cofactor is Mg(2+).

Its subcellular location is the cytoplasm. The enzyme catalyses shikimate + ATP = 3-phosphoshikimate + ADP + H(+). It participates in metabolic intermediate biosynthesis; chorismate biosynthesis; chorismate from D-erythrose 4-phosphate and phosphoenolpyruvate: step 5/7. Its function is as follows. Catalyzes the specific phosphorylation of the 3-hydroxyl group of shikimic acid using ATP as a cosubstrate. The sequence is that of Shikimate kinase 1 from Citrobacter koseri (strain ATCC BAA-895 / CDC 4225-83 / SGSC4696).